We begin with the raw amino-acid sequence, 66 residues long: DNA-directed RNA polymerase subunit Rpo10 (66 aa).

Cys-7, Cys-10, Cys-44, and Cys-45 together coordinate Zn(2+).

It belongs to the archaeal Rpo10/eukaryotic RPB10 RNA polymerase subunit family. Part of the RNA polymerase complex. Requires Zn(2+) as cofactor.

The protein resides in the cytoplasm. The enzyme catalyses RNA(n) + a ribonucleoside 5'-triphosphate = RNA(n+1) + diphosphate. DNA-dependent RNA polymerase (RNAP) catalyzes the transcription of DNA into RNA using the four ribonucleoside triphosphates as substrates. The chain is DNA-directed RNA polymerase subunit Rpo10 from Pyrobaculum aerophilum (strain ATCC 51768 / DSM 7523 / JCM 9630 / CIP 104966 / NBRC 100827 / IM2).